Consider the following 135-residue polypeptide: Small ribosomal subunit protein uS12 (135 aa).

Positions 1–23 (MPTINQLVRKGRHSKTTKSDSPA) are disordered. The residue at position 102 (D102) is a 3-methylthioaspartic acid.

It belongs to the universal ribosomal protein uS12 family. In terms of assembly, part of the 30S ribosomal subunit. Contacts proteins S8 and S17. May interact with IF1 in the 30S initiation complex.

With S4 and S5 plays an important role in translational accuracy. Its function is as follows. Interacts with and stabilizes bases of the 16S rRNA that are involved in tRNA selection in the A site and with the mRNA backbone. Located at the interface of the 30S and 50S subunits, it traverses the body of the 30S subunit contacting proteins on the other side and probably holding the rRNA structure together. The combined cluster of proteins S8, S12 and S17 appears to hold together the shoulder and platform of the 30S subunit. This is Small ribosomal subunit protein uS12 from Lactobacillus gasseri (strain ATCC 33323 / DSM 20243 / BCRC 14619 / CIP 102991 / JCM 1131 / KCTC 3163 / NCIMB 11718 / NCTC 13722 / AM63).